Here is a 366-residue protein sequence, read N- to C-terminus: Caffeic acid 3-O-methyltransferase (366 aa).

Position 131 to 137 (131 to 137) interacts with substrate; that stretch reads MNQDKIL. The substrate binding stretch occupies residues 163-181; sequence AFEYHGTDPRFNKIFNRGM. S-adenosyl-L-methionine contacts are provided by glycine 209, aspartate 232, aspartate 252, methionine 253, and lysine 266. The active-site Proton acceptor is histidine 270.

Belongs to the class I-like SAM-binding methyltransferase superfamily. Cation-independent O-methyltransferase family. COMT subfamily. As to quaternary structure, homodimer.

The catalysed reaction is (E)-caffeate + S-adenosyl-L-methionine = (E)-ferulate + S-adenosyl-L-homocysteine + H(+). Its pathway is aromatic compound metabolism; phenylpropanoid biosynthesis. Catalyzes the conversion of caffeic acid to ferulic acid and of 5-hydroxyferulic acid to sinapic acid. The resulting products may subsequently be converted to the corresponding alcohols that are incorporated into lignins. This chain is Caffeic acid 3-O-methyltransferase (OMT), found in Eucalyptus gunnii (Cider gum).